Here is a 106-residue protein sequence, read N- to C-terminus: Colipase A (106 aa).

Residues 1–11 form the signal peptide; it reads LLLVALAVAYA. A propeptide spans 12–16 (enterostatin, activation peptide); sequence VPDPR. Intrachain disulfides connect C28–C39, C34–C50, C38–C72, C60–C80, and C74–C98. W63 provides a ligand contact to taurodeoxycholate.

Belongs to the colipase family. As to quaternary structure, forms a 1:1 stoichiometric complex with pancreatic lipase. Expressed by the pancreas.

It is found in the secreted. Functionally, colipase is a cofactor of pancreatic lipase. It allows the lipase to anchor itself to the lipid-water interface. Without colipase the enzyme is washed off by bile salts, which have an inhibitory effect on the lipase. Enterostatin has a biological activity as a satiety signal. The chain is Colipase A (CLPS1) from Equus caballus (Horse).